A 767-amino-acid chain; its full sequence is Photosystem I P700 chlorophyll a apoprotein A1 (767 aa).

Helical transmembrane passes span Ile-72 to Ala-95, Leu-158 to His-181, Leu-197 to Leu-221, Ile-305 to Tyr-323, Trp-364 to Tyr-387, Ile-403 to Ile-429, Ala-451 to His-473, and Phe-548 to Leu-566. [4Fe-4S] cluster-binding residues include Cys-590 and Cys-599. Transmembrane regions (helical) follow at residues His-606–Trp-627 and Thr-681–Phe-703. His-692 provides a ligand contact to chlorophyll a'. Positions 700 and 708 each coordinate chlorophyll a. Trp-709 provides a ligand contact to phylloquinone. A helical transmembrane segment spans residues Ala-741–Ala-761.

The protein belongs to the PsaA/PsaB family. In terms of assembly, the PsaA/B heterodimer binds the P700 chlorophyll special pair and subsequent electron acceptors. PSI consists of a core antenna complex that captures photons, and an electron transfer chain that converts photonic excitation into a charge separation. The cyanobacterial PSI reaction center is composed of one copy each of PsaA,B,C,D,E,F,I,J,K,L,M and X, and forms trimeric complexes. It depends on PSI electron transfer chain: 5 chlorophyll a, 1 chlorophyll a', 2 phylloquinones and 3 4Fe-4S clusters. PSI core antenna: 90 chlorophyll a, 22 carotenoids, 3 phospholipids and 1 galactolipid. P700 is a chlorophyll a/chlorophyll a' dimer, A0 is one or more chlorophyll a, A1 is one or both phylloquinones and FX is a shared 4Fe-4S iron-sulfur center. as a cofactor.

The protein resides in the cellular thylakoid membrane. The enzyme catalyses reduced [plastocyanin] + hnu + oxidized [2Fe-2S]-[ferredoxin] = oxidized [plastocyanin] + reduced [2Fe-2S]-[ferredoxin]. Functionally, psaA and PsaB bind P700, the primary electron donor of photosystem I (PSI), as well as the electron acceptors A0, A1 and FX. PSI is a plastocyanin/cytochrome c6-ferredoxin oxidoreductase, converting photonic excitation into a charge separation, which transfers an electron from the donor P700 chlorophyll pair to the spectroscopically characterized acceptors A0, A1, FX, FA and FB in turn. Oxidized P700 is reduced on the lumenal side of the thylakoid membrane by plastocyanin or cytochrome c6. This is Photosystem I P700 chlorophyll a apoprotein A1 from Synechococcus sp. (strain WH7803).